A 221-amino-acid polypeptide reads, in one-letter code: Lactate racemization regulatory protein (221 aa).

Residues 139–213 enclose the HTH crp-type domain; that stretch reads NGKKGAICAF…NHKFIIQDVS (75 aa). Residues 172–192 constitute a DNA-binding region (H-T-H motif); it reads NDDIAGFCGISSRSSVNRMLK.

Multimerizes on DNA. Multimerization is required for transcription activation.

Its activity is regulated as follows. L-lactate acts as a positive effector on the binding and multimerization of LarR on DNA, while D-lactate antagonizes the positive effect of L-lactate. Positive transcriptional regulator that is absolutely required for the expression of lactate racemase (Lar) activity. Controls Lar expression by sensing the L-/D-lactate ration. Binds to a 16-bp palindromic sequence (Lar box motif) that is present in the larR-larA intergenic region, allowing transcription of the larABCDE operon. This is Lactate racemization regulatory protein from Lactiplantibacillus plantarum (strain ATCC BAA-793 / NCIMB 8826 / WCFS1) (Lactobacillus plantarum).